A 189-amino-acid chain; its full sequence is Putative ankyrin repeat protein L38 (189 aa).

The ANK repeat unit spans residues 108–137 (YGKTPLITAIKSGNCIMVKKLIDYGADFNK).

This chain is Putative ankyrin repeat protein L38, found in Acanthamoeba polyphaga mimivirus (APMV).